A 102-amino-acid chain; its full sequence is Thioredoxin (102 aa).

The Thioredoxin domain maps to 1 to 102 (MVKIISSENF…FLTNLINKHA (102 aa)). The cysteines at positions 28 and 31 are disulfide-linked.

The protein belongs to the thioredoxin family.

Functionally, participates in various redox reactions through the reversible oxidation of its active center dithiol to a disulfide and catalyzes dithiol-disulfide exchange reactions. This is Thioredoxin (trxA) from Chlamydia pneumoniae (Chlamydophila pneumoniae).